The chain runs to 167 residues: T-cell surface glycoprotein CD3 delta chain (167 aa).

The signal sequence occupies residues 1-21 (MEHSRCLSCLILAALLSQVNP). Residues 22–100 (RALEVLEAED…NCVELDSATL (79 aa)) lie on the Extracellular side of the membrane. An intrachain disulfide couples Cys37 to Cys73. N-linked (GlcNAc...) asparagine glycosylation is found at Asn38 and Asn55. Residues 101–121 (AGLIITDIIATVLLALGVYCF) form a helical membrane-spanning segment. The Cytoplasmic portion of the chain corresponds to 122–167 (AGHETGRFSRAADTQVLMGNDQLYQPLRERNDAQYSRLGDKWARNK). Residues 134 to 162 (DTQVLMGNDQLYQPLRERNDAQYSRLGDK) enclose the ITAM domain. Phosphotyrosine is present on residues Tyr145 and Tyr156.

In terms of assembly, the TCR-CD3 complex is composed of a CD3D/CD3E and a CD3G/CD3E heterodimers that preferentially associate with TCRalpha and TCRbeta, respectively, to form TCRalpha/CD3E/CD3G and TCRbeta/CD3G/CD3E trimers. In turn, the hexamer interacts with CD3Z homodimer to form the TCR-CD3 complex. Alternatively, TCRalpha and TCRbeta can be replaced by TCRgamma and TCRdelta. Interacts with coreceptors CD4 and CD8. Post-translationally, phosphorylated on Tyr residues after T-cell receptor triggering by LCK in association with CD4/CD8. As to expression, CD3D is mostly present on T-lymphocytes with its TCR-CD3 partners. Present also in fetal NK-cells.

It localises to the cell membrane. Part of the TCR-CD3 complex present on T-lymphocyte cell surface that plays an essential role in adaptive immune response. When antigen presenting cells (APCs) activate T-cell receptor (TCR), TCR-mediated signals are transmitted across the cell membrane by the CD3 chains CD3D, CD3E, CD3G and CD3Z. All CD3 chains contain immunoreceptor tyrosine-based activation motifs (ITAMs) in their cytoplasmic domain. Upon TCR engagement, these motifs become phosphorylated by Src family protein tyrosine kinases LCK and FYN, resulting in the activation of downstream signaling pathways. In addition of this role of signal transduction in T-cell activation, CD3D plays an essential role in thymocyte differentiation. Indeed, participates in correct intracellular TCR-CD3 complex assembly and surface expression. In absence of a functional TCR-CD3 complex, thymocytes are unable to differentiate properly. Interacts with CD4 and CD8 and thus serves to establish a functional link between the TCR and coreceptors CD4 and CD8, which is needed for activation and positive selection of CD4 or CD8 T-cells. The protein is T-cell surface glycoprotein CD3 delta chain (CD3D) of Ovis aries (Sheep).